A 166-amino-acid chain; its full sequence is NAD(P)H-quinone oxidoreductase subunit I, chloroplastic (166 aa).

2 4Fe-4S ferredoxin-type domains span residues 55–84 (GRIH…VDWQ) and 95–124 (VNYS…MTEE). [4Fe-4S] cluster is bound by residues C64, C67, C70, C74, C104, C107, C110, and C114.

Belongs to the complex I 23 kDa subunit family. As to quaternary structure, NDH is composed of at least 16 different subunits, 5 of which are encoded in the nucleus. The cofactor is [4Fe-4S] cluster.

It is found in the plastid. The protein localises to the chloroplast thylakoid membrane. The enzyme catalyses a plastoquinone + NADH + (n+1) H(+)(in) = a plastoquinol + NAD(+) + n H(+)(out). The catalysed reaction is a plastoquinone + NADPH + (n+1) H(+)(in) = a plastoquinol + NADP(+) + n H(+)(out). NDH shuttles electrons from NAD(P)H:plastoquinone, via FMN and iron-sulfur (Fe-S) centers, to quinones in the photosynthetic chain and possibly in a chloroplast respiratory chain. The immediate electron acceptor for the enzyme in this species is believed to be plastoquinone. Couples the redox reaction to proton translocation, and thus conserves the redox energy in a proton gradient. The chain is NAD(P)H-quinone oxidoreductase subunit I, chloroplastic from Coreopsis petrophiloides (Tickseed).